The primary structure comprises 425 residues: Serine--tRNA ligase (425 aa).

Position 230 to 232 (230 to 232 (TGE)) interacts with L-serine. Residue 261–263 (RKE) participates in ATP binding. E284 contacts L-serine. 348–351 (EISS) is a binding site for ATP. Position 385 (S385) interacts with L-serine.

It belongs to the class-II aminoacyl-tRNA synthetase family. Type-1 seryl-tRNA synthetase subfamily. Homodimer. The tRNA molecule binds across the dimer.

Its subcellular location is the cytoplasm. The catalysed reaction is tRNA(Ser) + L-serine + ATP = L-seryl-tRNA(Ser) + AMP + diphosphate + H(+). It catalyses the reaction tRNA(Sec) + L-serine + ATP = L-seryl-tRNA(Sec) + AMP + diphosphate + H(+). It participates in aminoacyl-tRNA biosynthesis; selenocysteinyl-tRNA(Sec) biosynthesis; L-seryl-tRNA(Sec) from L-serine and tRNA(Sec): step 1/1. In terms of biological role, catalyzes the attachment of serine to tRNA(Ser). Is also able to aminoacylate tRNA(Sec) with serine, to form the misacylated tRNA L-seryl-tRNA(Sec), which will be further converted into selenocysteinyl-tRNA(Sec). In Wolbachia sp. subsp. Brugia malayi (strain TRS), this protein is Serine--tRNA ligase.